Consider the following 300-residue polypeptide: MAEVVTGRFAPSPTGALHAGSMVAALASWLDVRAQGGVWLVRMEDVDTPRCVPGAAEQILSQLAACGLNSDRPPMWQSSRGAAYGAALAQLVEAGLAYPCACTRKQIEQDALAAGHLHLRQAERVYPGTCRPERGGLAGRAARAWRLHTARAGGSAAVSWSDRRLGRRSQGVEAAVGDFVLRRADGLWAYQLAVVVDDAAQGITDVVRGEDLADNTARQILLQRALGLPMPRYLHTPLVLAADGQKLSKQNGAVPVAMDDPAGVLRAAAAVLGLTLDAGRPVGETLAQAVALWRAGWLAR.

L-glutamate contacts are provided by residues 8-12 (RFAPS) and glutamate 44. The 'HIGH' region motif lies at 11 to 21 (PSPTGALHAGS). Positions 100, 102, 126, and 130 each coordinate Zn(2+). L-glutamate is bound by residues tyrosine 190 and arginine 208. The 'KMSKS' region signature appears at 246–250 (KLSKQ). Lysine 249 contributes to the ATP binding site.

It belongs to the class-I aminoacyl-tRNA synthetase family. GluQ subfamily. It depends on Zn(2+) as a cofactor.

Catalyzes the tRNA-independent activation of glutamate in presence of ATP and the subsequent transfer of glutamate onto a tRNA(Asp). Glutamate is transferred on the 2-amino-5-(4,5-dihydroxy-2-cyclopenten-1-yl) moiety of the queuosine in the wobble position of the QUC anticodon. The chain is Glutamyl-Q tRNA(Asp) synthetase from Leptothrix cholodnii (strain ATCC 51168 / LMG 8142 / SP-6) (Leptothrix discophora (strain SP-6)).